Here is a 423-residue protein sequence, read N- to C-terminus: Probable efflux pump mfs2 (423 aa).

Helical transmembrane passes span 21–41 (TMAL…IGPV), 49–69 (SIFH…GFAH), 79–99 (LLAG…LGDV), 111–131 (LYLL…GFIV), 138–158 (WMFW…LLFH), 220–240 (AILE…FSAL), 256–278 (YIVI…DYAY), 295–315 (IPLL…YGWA), 319–339 (HLIW…MQIF), 360–380 (AATQ…SNSL), and 392–411 (LLAF…LWRW).

It belongs to the major facilitator superfamily.

Its subcellular location is the membrane. In terms of biological role, probable efflux pump; part of the gene cluster 27 that mediates the biosynthesis of asparasone A, a sclerotium-specific anthraquinone pigment important for sclerotial survival. In Aspergillus flavus (strain ATCC 200026 / FGSC A1120 / IAM 13836 / NRRL 3357 / JCM 12722 / SRRC 167), this protein is Probable efflux pump mfs2.